The following is a 3075-amino-acid chain: Laminin subunit alpha-1 (3075 aa).

Residues 1 to 17 form the signal peptide; the sequence is MRGGVLLVLLLCVAAQC. A Laminin N-terminal domain is found at 18–269; sequence RQRGLFPAIL…SIKDISVGGM (252 aa). Intrachain disulfides connect cysteine 270–cysteine 279, cysteine 272–cysteine 290, cysteine 292–cysteine 301, cysteine 304–cysteine 324, cysteine 327–cysteine 336, cysteine 329–cysteine 361, cysteine 364–cysteine 373, cysteine 376–cysteine 394, cysteine 397–cysteine 409, cysteine 399–cysteine 427, cysteine 429–cysteine 438, cysteine 441–cysteine 451, cysteine 454–cysteine 467, cysteine 456–cysteine 471, cysteine 473–cysteine 482, and cysteine 485–cysteine 500. Laminin EGF-like domains lie at 270-326, 327-396, 397-453, and 454-502; these read CICY…TCEA, CNCH…PCRP, CNCD…TCVS, and CGCN…GCSE. The 10-residue stretch at 503 to 512 folds into the Laminin EGF-like 5; first part domain; it reads CFCFGVSDVC. The region spanning 516-708 is the Laminin IV type A 1 domain; that stretch reads SWPVGQVNSM…DLVVAADVEH (193 aa). The N-linked (GlcNAc...) asparagine glycan is linked to asparagine 665. One can recognise a Laminin EGF-like 5; second part domain in the interval 709–741; sequence CECPQGYTGTSCESCLSGYYRVDGILFGGICQP. 32 disulfides stabilise this stretch: cysteine 742–cysteine 751, cysteine 744–cysteine 757, cysteine 760–cysteine 769, cysteine 772–cysteine 788, cysteine 791–cysteine 806, cysteine 793–cysteine 816, cysteine 819–cysteine 828, cysteine 831–cysteine 846, cysteine 849–cysteine 863, cysteine 851–cysteine 870, cysteine 873–cysteine 882, cysteine 885–cysteine 899, cysteine 902–cysteine 914, cysteine 904–cysteine 921, cysteine 923–cysteine 932, cysteine 935–cysteine 948, cysteine 951–cysteine 963, cysteine 953–cysteine 969, cysteine 971–cysteine 980, cysteine 983–cysteine 995, cysteine 998–cysteine 1007, cysteine 1000–cysteine 1014, cysteine 1016–cysteine 1025, cysteine 1028–cysteine 1041, cysteine 1044–cysteine 1056, cysteine 1046–cysteine 1063, cysteine 1065–cysteine 1074, cysteine 1077–cysteine 1087, cysteine 1090–cysteine 1102, cysteine 1092–cysteine 1118, cysteine 1120–cysteine 1129, and cysteine 1132–cysteine 1147. Laminin EGF-like domains lie at 742 to 790, 791 to 848, 849 to 901, 902 to 950, 951 to 997, 998 to 1043, 1044 to 1089, and 1090 to 1149; these read CECH…DCQP, CACP…SCVP, CDCS…NCRA, CECH…GCRP, CNCS…SCTP, CDCP…GCQA, CNCS…DCVP, and CDCD…GCSP. The Laminin EGF-like 14; first part domain maps to 1150–1159; the sequence is CFCSGLSHLC. The 192-residue stretch at 1170 to 1361 folds into the Laminin IV type A 2 domain; sequence VTLGSDQPLL…EEEVASLLEN (192 aa). The region spanning 1362–1402 is the Laminin EGF-like 14; second part domain; that stretch reads CVCPPGTVGFSCQDCAPGYHRGKLPAGSDRGPRPLVAPCVP. 12 disulfide bridges follow: cysteine 1403/cysteine 1412, cysteine 1405/cysteine 1419, cysteine 1422/cysteine 1431, cysteine 1434/cysteine 1449, cysteine 1452/cysteine 1466, cysteine 1454/cysteine 1476, cysteine 1479/cysteine 1488, cysteine 1491/cysteine 1506, cysteine 1509/cysteine 1521, cysteine 1511/cysteine 1528, cysteine 1530/cysteine 1539, and cysteine 1542/cysteine 1553. Laminin EGF-like domains lie at 1403-1451, 1452-1508, and 1509-1555; these read CSCN…DCAL, CACP…SCQK, and CDCN…DCVS. A domain II and I region spans residues 1556–2116; the sequence is CDDECVGVLL…SQARKQAASI (561 aa). N-linked (GlcNAc...) asparagine glycosylation is found at asparagine 1579, asparagine 1689, asparagine 1717, asparagine 2047, and asparagine 2243. A coiled-coil region spans residues 1706 to 1783; that stretch reads MQIRDFTQLH…KMQESNHLLL (78 aa). Laminin G-like domains follow at residues 2117-2297, 2305-2481, 2486-2673, 2713-2885, and 2890-3070; these read KVAV…CRGC, DPSF…RKGC, IRSV…LDTC, AHQF…VNRC, and QEGT…LHSC. 2 disulfides stabilise this stretch: cysteine 2271–cysteine 2297 and cysteine 2457–cysteine 2481. The Cell attachment site signature appears at 2534–2536; sequence RGD. 3 cysteine pairs are disulfide-bonded: cysteine 2646/cysteine 2673, cysteine 2860/cysteine 2885, and cysteine 3039/cysteine 3070.

As to quaternary structure, laminin is a complex glycoprotein, consisting of three different polypeptide chains (alpha, beta, gamma), which are bound to each other by disulfide bonds into a cross-shaped molecule comprising one long and three short arms with globules at each end. Alpha-1 is a subunit of laminin-1 (laminin-111 or EHS laminin) and laminin-3 (laminin-121 or S-laminin). Post-translationally, tyrosine phosphorylated by PKDCC/VLK.

The protein resides in the secreted. The protein localises to the extracellular space. It is found in the extracellular matrix. Its subcellular location is the basement membrane. Its function is as follows. Binding to cells via a high affinity receptor, laminin is thought to mediate the attachment, migration and organization of cells into tissues during embryonic development by interacting with other extracellular matrix components. The protein is Laminin subunit alpha-1 (LAMA1) of Homo sapiens (Human).